The following is a 568-amino-acid chain: Periplasmic trehalase (568 aa).

A signal peptide spans 1-38 (MPHAPARSGDAMSAAAPPCCTSLLGLSLSMFVAPCALA). Substrate-binding positions include R169, 176–177 (WD), N213, 222–224 (RSQ), 294–296 (RPE), and G327. Active-site proton donor/acceptor residues include D329 and E511. Residue E526 coordinates substrate.

It belongs to the glycosyl hydrolase 37 family.

The protein localises to the periplasm. The catalysed reaction is alpha,alpha-trehalose + H2O = alpha-D-glucose + beta-D-glucose. Its function is as follows. Provides the cells with the ability to utilize trehalose at high osmolarity by splitting it into glucose molecules that can subsequently be taken up by the phosphotransferase-mediated uptake system. This Xanthomonas campestris pv. campestris (strain 8004) protein is Periplasmic trehalase.